The following is a 429-amino-acid chain: Enolase (429 aa).

Gln163 contributes to the (2R)-2-phosphoglycerate binding site. Glu205 acts as the Proton donor in catalysis. Mg(2+)-binding residues include Asp242, Glu287, and Asp314. (2R)-2-phosphoglycerate-binding residues include Lys339, Arg368, Ser369, and Lys390. Lys339 (proton acceptor) is an active-site residue.

Belongs to the enolase family. In terms of assembly, homooctamer. Mg(2+) serves as cofactor.

It localises to the cytoplasm. Its subcellular location is the secreted. The protein localises to the cell surface. It carries out the reaction (2R)-2-phosphoglycerate = phosphoenolpyruvate + H2O. The protein operates within carbohydrate degradation; glycolysis; pyruvate from D-glyceraldehyde 3-phosphate: step 4/5. Catalyzes the reversible conversion of 2-phosphoglycerate (2-PG) into phosphoenolpyruvate (PEP). It is essential for the degradation of carbohydrates via glycolysis. This Zymomonas mobilis subsp. mobilis (strain ATCC 31821 / ZM4 / CP4) protein is Enolase.